The sequence spans 347 residues: Quinolinate synthase (347 aa).

2 residues coordinate iminosuccinate: His-47 and Ser-68. Residue Cys-113 participates in [4Fe-4S] cluster binding. Residues 139 to 141 and Ser-156 each bind iminosuccinate; that span reads YAN. Position 200 (Cys-200) interacts with [4Fe-4S] cluster. Iminosuccinate-binding positions include 226-228 and Thr-243; that span reads HPE. Cys-297 is a binding site for [4Fe-4S] cluster.

It belongs to the quinolinate synthase family. Type 1 subfamily. [4Fe-4S] cluster serves as cofactor.

The protein localises to the cytoplasm. It carries out the reaction iminosuccinate + dihydroxyacetone phosphate = quinolinate + phosphate + 2 H2O + H(+). It participates in cofactor biosynthesis; NAD(+) biosynthesis; quinolinate from iminoaspartate: step 1/1. Functionally, catalyzes the condensation of iminoaspartate with dihydroxyacetone phosphate to form quinolinate. The sequence is that of Quinolinate synthase from Escherichia coli O127:H6 (strain E2348/69 / EPEC).